Reading from the N-terminus, the 365-residue chain is Coxsackievirus and adenovirus receptor homolog (365 aa).

The N-terminal stretch at 1–19 is a signal peptide; the sequence is MALLLCFVLLCGVADFTSS. Ig-like C2-type domains follow at residues 20–136 and 141–228; these read LSIT…FLLT and PSGT…LRLD. At 20–238 the chain is on the extracellular side; sequence LSITTPEQRI…VVPPSNRAGT (219 aa). 3 disulfide bridges follow: cysteine 41/cysteine 120, cysteine 146/cysteine 223, and cysteine 162/cysteine 212. A glycan (N-linked (GlcNAc...) asparagine) is linked at asparagine 106. The helical transmembrane segment at 239 to 259 threads the bilayer; the sequence is IAGAVIGTLLALVLIGAILFC. S-palmitoyl cysteine attachment occurs at residues cysteine 259 and cysteine 260. The Cytoplasmic segment spans residues 260-365; the sequence is CHKKRREEKY…PAQSKDGSIV (106 aa). The segment covering 269–282 has biased composition (basic and acidic residues); sequence YEKEVHHDIREDVP. Residues 269-315 are disordered; it reads YEKEVHHDIREDVPPPKSRTSTARSYIGSNHSSLGSMSPSNMEGYSK. The span at 286–315 shows a compositional bias: polar residues; it reads SRTSTARSYIGSNHSSLGSMSPSNMEGYSK. Phosphoserine occurs at positions 297, 304, 306, 323, 332, and 363. The short motif at 360-365 is the PDZ-binding element; sequence KDGSIV.

In terms of assembly, monomer. May form homodimer. Interacts with LNX, MAGI1, DLG4, PRKCABP, TJP1 and CTNNB1. Interacts with MPDZ; recruits MPDZ to intercellular contact sites. Interacts with JAML (homodimeric form). In terms of processing, N-glycosylated. Post-translationally, palmitoylated on Cys-259 and/or Cys-260; required for proper localization to the plasma membrane. As to expression, expressed in heart, brain, spleen, lung, liver, muscle, kidney, testis, spleen and skeletal muscle.

It localises to the cell membrane. The protein resides in the basolateral cell membrane. Its subcellular location is the cell junction. It is found in the tight junction. The protein localises to the adherens junction. In terms of biological role, component of the epithelial apical junction complex that may function as a homophilic cell adhesion molecule and is essential for tight junction integrity. Also involved in transepithelial migration of leukocytes through adhesive interactions with JAML a transmembrane protein of the plasma membrane of leukocytes. The interaction between both receptors also mediates the activation of gamma-delta T-cells, a subpopulation of T-cells residing in epithelia and involved in tissue homeostasis and repair. Upon epithelial CXADR-binding, JAML induces downstream cell signaling events in gamma-delta T-cells through PI3-kinase and MAP kinases. It results in proliferation and production of cytokines and growth factors by T-cells that in turn stimulate epithelial tissues repair. This Rattus norvegicus (Rat) protein is Coxsackievirus and adenovirus receptor homolog (Cxadr).